Reading from the N-terminus, the 182-residue chain is Ribosome-recycling factor (182 aa).

It belongs to the RRF family.

It is found in the cytoplasm. In terms of biological role, responsible for the release of ribosomes from messenger RNA at the termination of protein biosynthesis. May increase the efficiency of translation by recycling ribosomes from one round of translation to another. The sequence is that of Ribosome-recycling factor from Nostoc sp. (strain PCC 7120 / SAG 25.82 / UTEX 2576).